The sequence spans 180 residues: ATP-dependent protease subunit HslV (180 aa).

Thr-5 is an active-site residue. Residues Gly-161, Cys-164, and Thr-167 each coordinate Na(+).

Belongs to the peptidase T1B family. HslV subfamily. In terms of assembly, a double ring-shaped homohexamer of HslV is capped on each side by a ring-shaped HslU homohexamer. The assembly of the HslU/HslV complex is dependent on binding of ATP.

The protein localises to the cytoplasm. The catalysed reaction is ATP-dependent cleavage of peptide bonds with broad specificity.. With respect to regulation, allosterically activated by HslU binding. Functionally, protease subunit of a proteasome-like degradation complex believed to be a general protein degrading machinery. In Campylobacter jejuni subsp. jejuni serotype O:2 (strain ATCC 700819 / NCTC 11168), this protein is ATP-dependent protease subunit HslV.